Consider the following 287-residue polypeptide: Elongation factor Ts (287 aa).

The segment at 79 to 82 (TDFV) is involved in Mg(2+) ion dislocation from EF-Tu.

It belongs to the EF-Ts family.

The protein localises to the cytoplasm. Functionally, associates with the EF-Tu.GDP complex and induces the exchange of GDP to GTP. It remains bound to the aminoacyl-tRNA.EF-Tu.GTP complex up to the GTP hydrolysis stage on the ribosome. This Anaplasma phagocytophilum (strain HZ) protein is Elongation factor Ts.